The primary structure comprises 231 residues: Small ribosomal subunit protein uS2 (231 aa).

This sequence belongs to the universal ribosomal protein uS2 family.

The chain is Small ribosomal subunit protein uS2 from Blochmanniella floridana.